We begin with the raw amino-acid sequence, 96 residues long: RNA-binding protein Hfq (96 aa).

The region spanning 9 to 68 is the Sm domain; the sequence is DPYLNALRRERIPVSIYLVNGIKLQGQIESFDQFVILLKNTVNQMVYKHAISTVVPARSV. The tract at residues 67 to 96 is disordered; the sequence is SVSHHNNSNNSNQQNYQQEQQTDSNVEKAE. Over residues 72–87 the composition is skewed to low complexity; it reads NNSNNSNQQNYQQEQQ.

It belongs to the Hfq family. As to quaternary structure, homohexamer.

Functionally, RNA chaperone that binds small regulatory RNA (sRNAs) and mRNAs to facilitate mRNA translational regulation in response to envelope stress, environmental stress and changes in metabolite concentrations. Also binds with high specificity to tRNAs. This is RNA-binding protein Hfq from Pasteurella multocida (strain Pm70).